We begin with the raw amino-acid sequence, 276 residues long: Pyrroline-5-carboxylate reductase (276 aa).

The protein belongs to the pyrroline-5-carboxylate reductase family.

It localises to the cytoplasm. It carries out the reaction L-proline + NADP(+) = (S)-1-pyrroline-5-carboxylate + NADPH + 2 H(+). It catalyses the reaction L-proline + NAD(+) = (S)-1-pyrroline-5-carboxylate + NADH + 2 H(+). The protein operates within amino-acid biosynthesis; L-proline biosynthesis; L-proline from L-glutamate 5-semialdehyde: step 1/1. The sequence is that of Pyrroline-5-carboxylate reductase (PROC1) from Arabidopsis thaliana (Mouse-ear cress).